The chain runs to 134 residues: MQKEELTRDPNLTNPLVLAFLGDATYSHCVRYHLIAKGLVKPNQLHKAANRYVSAKAQANVLLTLMPTLPEEELNVVKRGRNAKSGSSAKNADIIDYRHATAFEALIGYLYLSGKEERIAEIVQQAFAIVEGES.

Asp23 is an active-site residue.

This sequence belongs to the MrnC RNase family. In terms of assembly, homodimer. The cofactor is Mg(2+).

The protein localises to the cytoplasm. In terms of biological role, involved in correct processing of both the 5' and 3' ends of 23S rRNA precursor. Processes 30S rRNA precursor transcript even in absence of ribonuclease 3 (Rnc); Rnc processes 30S rRNA into smaller rRNA precursors. The sequence is that of Mini-ribonuclease 3 from Brevibacillus brevis (strain 47 / JCM 6285 / NBRC 100599).